We begin with the raw amino-acid sequence, 228 residues long: DNA-binding response regulator MtrA (228 aa).

In terms of domain architecture, Response regulatory spans 7 to 120 (RILVVDDDAS…ELVARVRARL (114 aa)). Aspartate 56 is subject to 4-aspartylphosphate. A DNA-binding region (ompR/PhoB-type) is located at residues 128-227 (AEMLSIADVE…VRGVGYKAGP (100 aa)).

Phosphorylated by MtrB.

In terms of biological role, member of the two-component regulatory system MtrA/MtrB. In Mycobacterium bovis (strain ATCC BAA-935 / AF2122/97), this protein is DNA-binding response regulator MtrA (mtrA).